The sequence spans 361 residues: Large ribosomal subunit protein mL45 (361 aa).

The disordered stretch occupies residues 319–361 (EPPKELSAGDAEVKQVDSVGEQSKEQLPLATPVESHTKPSLAI).

Belongs to the mitochondrion-specific ribosomal protein mL45 family.

The protein localises to the mitochondrion. The protein is Large ribosomal subunit protein mL45 (mRpL45) of Drosophila melanogaster (Fruit fly).